The primary structure comprises 183 residues: ATP synthase subunit b, chloroplastic (183 aa).

The chain crosses the membrane as a helical span at residues 25 to 45 (DILATNLINLTVVVGVLIFFG).

This sequence belongs to the ATPase B chain family. F-type ATPases have 2 components, F(1) - the catalytic core - and F(0) - the membrane proton channel. F(1) has five subunits: alpha(3), beta(3), gamma(1), delta(1), epsilon(1). F(0) has four main subunits: a(1), b(1), b'(1) and c(10-14). The alpha and beta chains form an alternating ring which encloses part of the gamma chain. F(1) is attached to F(0) by a central stalk formed by the gamma and epsilon chains, while a peripheral stalk is formed by the delta, b and b' chains.

The protein resides in the plastid. The protein localises to the chloroplast thylakoid membrane. F(1)F(0) ATP synthase produces ATP from ADP in the presence of a proton or sodium gradient. F-type ATPases consist of two structural domains, F(1) containing the extramembraneous catalytic core and F(0) containing the membrane proton channel, linked together by a central stalk and a peripheral stalk. During catalysis, ATP synthesis in the catalytic domain of F(1) is coupled via a rotary mechanism of the central stalk subunits to proton translocation. Functionally, component of the F(0) channel, it forms part of the peripheral stalk, linking F(1) to F(0). In Zea mays (Maize), this protein is ATP synthase subunit b, chloroplastic.